A 214-amino-acid polypeptide reads, in one-letter code: Small ribosomal subunit protein eS6 (214 aa).

The protein belongs to the eukaryotic ribosomal protein eS6 family.

The protein is Small ribosomal subunit protein eS6 of Saccharolobus solfataricus (strain ATCC 35092 / DSM 1617 / JCM 11322 / P2) (Sulfolobus solfataricus).